We begin with the raw amino-acid sequence, 225 residues long: Urease accessory protein UreG (225 aa).

25–32 (GPVGAGKT) serves as a coordination point for GTP.

The protein belongs to the SIMIBI class G3E GTPase family. UreG subfamily. As to quaternary structure, homodimer. UreD, UreF and UreG form a complex that acts as a GTP-hydrolysis-dependent molecular chaperone, activating the urease apoprotein by helping to assemble the nickel containing metallocenter of UreC. The UreE protein probably delivers the nickel.

It localises to the cytoplasm. In terms of biological role, facilitates the functional incorporation of the urease nickel metallocenter. This process requires GTP hydrolysis, probably effectuated by UreG. This chain is Urease accessory protein UreG, found in Haemophilus influenzae (strain ATCC 51907 / DSM 11121 / KW20 / Rd).